A 326-amino-acid polypeptide reads, in one-letter code: Vacuolar protein sorting-associated protein 26A (326 aa).

This sequence belongs to the VPS26 family. Component of the heterotrimeric retromer cargo-selective complex (CSC) which is believed to associate with variable sorting nexins to form functionally distinct retromer complex variants.

It localises to the cytoplasm. Its subcellular location is the endosome membrane. The protein localises to the early endosome. Acts as a component of the retromer cargo-selective complex (CSC). The CSC is believed to be the core functional component of retromer or respective retromer complex variants acting to prevent missorting of selected transmembrane cargo proteins into the lysosomal degradation pathway. Retromer mediates retrograde transport of cargo proteins from endosomes to the trans-Golgi network (TGN). The protein is Vacuolar protein sorting-associated protein 26A (vps26a) of Xenopus tropicalis (Western clawed frog).